Here is an 860-residue protein sequence, read N- to C-terminus: Transforming growth factor-beta receptor-associated protein 1 (860 aa).

Residues 24–297 (HISIECVECC…HILQDFEGRV (274 aa)) enclose the CNH domain. A CHCR repeat occupies 564 to 732 (RPLDEQQQTS…YLRAGPSAQD (169 aa)).

This sequence belongs to the TRAP1 family. Interacts with TGFBR2 and ACVR2B; in the absence of ligand stimulation. Interacts with TGFBR1, ACVRL1, BMPR1A and ACVR1B; in the absence of ligand stimulation and to a less extent. Interacts with SMAD4; the interaction seems to be mutually exclusive with the interaction of SMAD4 and phosphorylated SMAD2. May interact with ALOX5. Interacts with RAB5C. Interacts with VPS8, VPS11 and VPS16. Component of the putative class C core vacuole/endosome tethering (CORVET) complex; the core of which composed of the class C Vps proteins VPS11, VPS16, VPS18 and VPS33A, is associated with VPS8 and TGFBRAP1.

The protein resides in the cytoplasm. It localises to the early endosome. Its function is as follows. Plays a role in the TGF-beta/activin signaling pathway. It associates with inactive heteromeric TGF-beta and activin receptor complexes, mainly through the type II receptor, and is released upon activation of signaling. May recruit SMAD4 to the vicinity of the receptor complex and facilitate its interaction with receptor-regulated Smads, such as SMAD2. Functionally, plays a role in vesicle-mediated protein trafficking of the endocytic membrane transport pathway. Believed to act as a component of the putative CORVET endosomal tethering complexes which is proposed to be involved in the Rab5-to-Rab7 endosome conversion probably implicating MON1A/B, and via binding SNAREs and SNARE complexes to mediate tethering and docking events during SNARE-mediated membrane fusion. The CORVET complex is proposed to function as a Rab5 effector to mediate early endosome fusion probably in specific endosome subpopulations. Functions predominantly in APPL1-containing endosomes and in degradative but not recycling trafficking of endocytosed cargo. This Mus musculus (Mouse) protein is Transforming growth factor-beta receptor-associated protein 1 (Tgfbrap1).